The sequence spans 292 residues: Ribosomal RNA small subunit methyltransferase A (292 aa).

S-adenosyl-L-methionine contacts are provided by N28, L30, G55, E76, D101, and N126.

This sequence belongs to the class I-like SAM-binding methyltransferase superfamily. rRNA adenine N(6)-methyltransferase family. RsmA subfamily.

The protein resides in the cytoplasm. The catalysed reaction is adenosine(1518)/adenosine(1519) in 16S rRNA + 4 S-adenosyl-L-methionine = N(6)-dimethyladenosine(1518)/N(6)-dimethyladenosine(1519) in 16S rRNA + 4 S-adenosyl-L-homocysteine + 4 H(+). Functionally, specifically dimethylates two adjacent adenosines (A1518 and A1519) in the loop of a conserved hairpin near the 3'-end of 16S rRNA in the 30S particle. May play a critical role in biogenesis of 30S subunits. This Bacillus cytotoxicus (strain DSM 22905 / CIP 110041 / 391-98 / NVH 391-98) protein is Ribosomal RNA small subunit methyltransferase A.